Here is a 364-residue protein sequence, read N- to C-terminus: MEELPQSSDFRSIVLNNTPLIDVRAPVEFAKGAFPHAVNLPLMNDEERHVVGIKYKEEGNAEAVKLGHALVSGDVKEARIKAWTDFIASHPDAMLYCFRGGQRSQIAQEWLAENGREIVRLKGGYKAFRNWLMQETEKAVEQFKPIVLGGRTGSGKTILLKKLQNAIDLEGLANHRGSSFGRDITPQPTLIDFENALAYDLIQKLDQGFEHLVFEDEGKCVGRIYLPKILVEHLSEAPLVVLETPTEKRIEITFDEYVAKAHEKYKEVYHADYLKVWTEDMHEAMKRIQKRLGGQRYKIVCEIFEDALKEQKKNSSLEGYKVWIAYLLSEYYDPMYDYQIERNASRILFRGNAQEIEAFLKEYR.

The 123-residue stretch at 14 to 136 (VLNNTPLIDV…AFRNWLMQET (123 aa)) folds into the Rhodanese domain. C97 functions as the S-selanylcysteine intermediate in the catalytic mechanism.

Belongs to the SelU family. Monomer.

The enzyme catalyses 5-methylaminomethyl-2-thiouridine(34) in tRNA + selenophosphate + (2E)-geranyl diphosphate + H2O + H(+) = 5-methylaminomethyl-2-selenouridine(34) in tRNA + (2E)-thiogeraniol + phosphate + diphosphate. The catalysed reaction is 5-methylaminomethyl-2-thiouridine(34) in tRNA + (2E)-geranyl diphosphate = 5-methylaminomethyl-S-(2E)-geranyl-thiouridine(34) in tRNA + diphosphate. It carries out the reaction 5-methylaminomethyl-S-(2E)-geranyl-thiouridine(34) in tRNA + selenophosphate + H(+) = 5-methylaminomethyl-2-(Se-phospho)selenouridine(34) in tRNA + (2E)-thiogeraniol. It catalyses the reaction 5-methylaminomethyl-2-(Se-phospho)selenouridine(34) in tRNA + H2O = 5-methylaminomethyl-2-selenouridine(34) in tRNA + phosphate. Its function is as follows. Involved in the post-transcriptional modification of the uridine at the wobble position (U34) of tRNA(Lys), tRNA(Glu) and tRNA(Gln). Catalyzes the conversion of 2-thiouridine (S2U-RNA) to 2-selenouridine (Se2U-RNA). Acts in a two-step process involving geranylation of 2-thiouridine (S2U) to S-geranyl-2-thiouridine (geS2U) and subsequent selenation of the latter derivative to 2-selenouridine (Se2U) in the tRNA chain. The chain is tRNA 2-selenouridine synthase from Sulfurovum sp. (strain NBC37-1).